We begin with the raw amino-acid sequence, 566 residues long: Arginine--tRNA ligase (566 aa).

Residues 123 to 133 carry the 'HIGH' region motif; the sequence is PNVAKPFHVGH.

It belongs to the class-I aminoacyl-tRNA synthetase family. In terms of assembly, monomer.

The protein localises to the cytoplasm. It carries out the reaction tRNA(Arg) + L-arginine + ATP = L-arginyl-tRNA(Arg) + AMP + diphosphate. The polypeptide is Arginine--tRNA ligase (Alkaliphilus metalliredigens (strain QYMF)).